We begin with the raw amino-acid sequence, 519 residues long: Ribonuclease Y 1 (519 aa).

Residues 3–23 (VPIVILAIIAIVVGVVGGYYL) traverse the membrane as a helical segment. Residues 92 to 120 (QREETLDRKDNSLEKRENSLNRRDKKLSA) are compositionally biased toward basic and acidic residues. Positions 92–124 (QREETLDRKDNSLEKRENSLNRRDKKLSAEEQN) are disordered. Positions 209-272 (TITVVTLPND…EVAKIALEKL (64 aa)) constitute a KH domain. The HD domain maps to 335 to 428 (ALAHSIEVAK…VSTADIISAT (94 aa)).

This sequence belongs to the RNase Y family.

The protein resides in the cell membrane. Functionally, endoribonuclease that initiates mRNA decay. The chain is Ribonuclease Y 1 from Levilactobacillus brevis (strain ATCC 367 / BCRC 12310 / CIP 105137 / JCM 1170 / LMG 11437 / NCIMB 947 / NCTC 947) (Lactobacillus brevis).